The chain runs to 118 residues: Acidic elicitin A1 (118 aa).

A signal peptide spans 1 to 20 (MNFRALFAATVAALVGSTSA). Intrachain disulfides connect C23-C91, C47-C76, and C71-C115.

The protein belongs to the elicitin family.

The protein resides in the secreted. Induces local and distal defense responses (incompatible hypersensitive reaction) in plants from the solanaceae and cruciferae families. Elicits leaf necrosis and causes the accumulation of pathogenesis-related proteins. Might interact with the lipidic molecules of the plasma membrane. In Phytophthora cryptogea, this protein is Acidic elicitin A1 (B14).